We begin with the raw amino-acid sequence, 710 residues long: Methionine--tRNA ligase (710 aa).

The 'HIGH' region signature appears at 26-36 (PYANGQIHIGH). Cys157, Cys160, Cys170, and Cys173 together coordinate Zn(2+). The 'KMSKS' region signature appears at 347 to 351 (KMSKS). Lys350 provides a ligand contact to ATP. Residues 604-710 (DFAKIDLRIA…SGAKPGMRVK (107 aa)) form the tRNA-binding domain.

It belongs to the class-I aminoacyl-tRNA synthetase family. MetG type 1 subfamily. In terms of assembly, homodimer. Zn(2+) serves as cofactor.

Its subcellular location is the cytoplasm. The catalysed reaction is tRNA(Met) + L-methionine + ATP = L-methionyl-tRNA(Met) + AMP + diphosphate. Functionally, is required not only for elongation of protein synthesis but also for the initiation of all mRNA translation through initiator tRNA(fMet) aminoacylation. This chain is Methionine--tRNA ligase, found in Paraburkholderia xenovorans (strain LB400).